Reading from the N-terminus, the 409-residue chain is MARAKFERNKPHLNIGTIGHVDHGKTTLTAAITMTLAALGQATAKGYDQIDNAPEEKARGITINTAHVEYETENRHYAHVDCPGHADYVKNMITGAAQMDGGILVVAATDGPMPQTREHILLAKQVGVPSLVVFLNKEDLMDDPELLELVELELRELLSSYDFPGDDIPIIKGSGLQALEAMTKNPKTKKGENPWVDKIYELMDAVDSFIPTPERDVDKPFLMAVEDVFTITGRGTVATGRIERGKVKVGDTVELIGLKDTRTTAVTGIEMFKKSLEEGLAGDNAGVLLRGLKKEDIERGMVIAKPGSITPHTQFEGEVYVLTEKEGGRKTPFFAGYRPQFYVRTTDVTGTIKAYTSDEGKEVEMVMPGDRIKMTVELINAIAIEQGMRFAIREGGRTIGAGVVSKIIK.

The tr-type G domain occupies K10 to E214. The G1 stretch occupies residues G19–T26. GTP is bound at residue G19 to T26. Position 26 (T26) interacts with Mg(2+). The G2 stretch occupies residues G60–N64. Positions D81–G84 are G3. Residues D81 to H85 and N136 to D139 contribute to the GTP site. The segment at N136–D139 is G4. The tract at residues S174–L176 is G5.

The protein belongs to the TRAFAC class translation factor GTPase superfamily. Classic translation factor GTPase family. EF-Tu/EF-1A subfamily. As to quaternary structure, monomer.

The protein localises to the cytoplasm. It carries out the reaction GTP + H2O = GDP + phosphate + H(+). Functionally, GTP hydrolase that promotes the GTP-dependent binding of aminoacyl-tRNA to the A-site of ribosomes during protein biosynthesis. The protein is Elongation factor Tu of Nostoc punctiforme (strain ATCC 29133 / PCC 73102).